Here is a 1005-residue protein sequence, read N- to C-terminus: Mitogen-activated protein kinase kinase kinase 10 (1005 aa).

One can recognise an SH3 domain in the interval 32–96 (VSNPLWMAVF…PSNYVVSDDK (65 aa)). The Protein kinase domain maps to 118–380 (LNLDEIIGVG…SCILEQLTTI (263 aa)). ATP-binding positions include 124–132 (IGVGGFGKV) and Lys-145. Catalysis depends on Asp-242, which acts as the Proton acceptor. Leucine-zipper regions lie at residues 404–425 (IQQM…EEEL) and 439–460 (LKRR…ELNI). Disordered stretches follow at residues 551-611 (SVLK…KHTP), 647-676 (QSDH…QSRR), 712-736 (FQWA…GEDS), and 758-940 (RSLI…AEGA). 2 stretches are compositionally biased toward basic and acidic residues: residues 576-588 (QKER…RLKT) and 648-658 (SDHRSHPEDTA). Composition is skewed to basic and acidic residues over residues 761-786 (IRSD…EDRG) and 799-809 (YKVESFKRDPK). Residues 810-826 (QSLTPTHVTVGRNNTTE) are compositionally biased toward polar residues. Pro residues predominate over residues 862–879 (EPSPFPRLPDPHFVFPPP). The span at 915–940 (SLSQTHSSSPSSGGGDACSSGSAEGA) shows a compositional bias: low complexity.

Belongs to the protein kinase superfamily. STE Ser/Thr protein kinase family. MAP kinase kinase kinase subfamily. As to quaternary structure, homodimer. Binds to the GTPase rac1 but not cdc42 or rhoA. Interacts (via kinase domain) with pak1 (via kinase domain). Interacts with the ubiquitin-conjugating enzyme ube2d4. Mg(2+) is required as a cofactor. Autophosphorylation on serine and threonine residues within the activation loop plays a role in enzyme activation. Post-translationally, mono- and poly-ubiquitinated. In terms of tissue distribution, in adults, strongly expressed in the brain and spleen with lower levels in pancreas, heart, muscle and kidney (at protein level). In the developing embryo, expressed at stage 22 in the cement gland. Weakly expressed in the pronephros from stage 24 or 25, with expression increasing in strength by stage 30 and continuing at least until stage 37. Expression in the developing pronephros correlates with epithelialization of the proximal pronephric tubules.

It carries out the reaction L-seryl-[protein] + ATP = O-phospho-L-seryl-[protein] + ADP + H(+). The enzyme catalyses L-threonyl-[protein] + ATP = O-phospho-L-threonyl-[protein] + ADP + H(+). Homodimerization via the leucine zipper domains is required for autophosphorylation and subsequent activation. Activates the JUN N-terminal pathway. Essential for pronephros and cement gland development. The sequence is that of Mitogen-activated protein kinase kinase kinase 10 (map3k10) from Xenopus laevis (African clawed frog).